Consider the following 203-residue polypeptide: Holliday junction branch migration complex subunit RuvA (203 aa).

The interval 1-63 (MIGKLSGRVD…EDHINLYGFL (63 aa)) is domain I. Residues 64–142 (SLEEKSFFNL…KISSSSAAIK (79 aa)) form a domain II region. Positions 143–149 (DSLNIKG) are flexible linker. The domain III stretch occupies residues 150–203 (ITPVASSEVIKALINMGFSRFEAQNAVQEIITKNPEISIDELIRTALKNRNSNF).

This sequence belongs to the RuvA family. In terms of assembly, homotetramer. Forms an RuvA(8)-RuvB(12)-Holliday junction (HJ) complex. HJ DNA is sandwiched between 2 RuvA tetramers; dsDNA enters through RuvA and exits via RuvB. An RuvB hexamer assembles on each DNA strand where it exits the tetramer. Each RuvB hexamer is contacted by two RuvA subunits (via domain III) on 2 adjacent RuvB subunits; this complex drives branch migration. In the full resolvosome a probable DNA-RuvA(4)-RuvB(12)-RuvC(2) complex forms which resolves the HJ.

Its subcellular location is the cytoplasm. The RuvA-RuvB-RuvC complex processes Holliday junction (HJ) DNA during genetic recombination and DNA repair, while the RuvA-RuvB complex plays an important role in the rescue of blocked DNA replication forks via replication fork reversal (RFR). RuvA specifically binds to HJ cruciform DNA, conferring on it an open structure. The RuvB hexamer acts as an ATP-dependent pump, pulling dsDNA into and through the RuvAB complex. HJ branch migration allows RuvC to scan DNA until it finds its consensus sequence, where it cleaves and resolves the cruciform DNA. The sequence is that of Holliday junction branch migration complex subunit RuvA from Rickettsia bellii (strain OSU 85-389).